A 324-amino-acid polypeptide reads, in one-letter code: Cyclin-dependent kinase 1 (324 aa).

One can recognise a Protein kinase domain in the interval 4-307; that stretch reads YQKIEKIGEG…AKQACMHPYF (304 aa). Residues 10 to 18 and Lys-34 contribute to the ATP site; that span reads IGEGTYGVV. Position 14 is a phosphothreonine (Thr-14). Tyr-15 carries the post-translational modification Phosphotyrosine. Catalysis depends on Asp-148, which acts as the Proton acceptor. Thr-181 bears the Phosphothreonine; by CAK mark.

Belongs to the protein kinase superfamily. CMGC Ser/Thr protein kinase family. CDC2/CDKX subfamily. Forms a stable but non-covalent complex with a regulatory subunit (SUC1) and with a cyclin.

It carries out the reaction L-seryl-[protein] + ATP = O-phospho-L-seryl-[protein] + ADP + H(+). It catalyses the reaction L-threonyl-[protein] + ATP = O-phospho-L-threonyl-[protein] + ADP + H(+). Its activity is regulated as follows. Phosphorylation at Thr-14 or Tyr-15 inactivates the enzyme, while phosphorylation at Thr-181 activates it. Cyclin-dependent kinase that acts as a master regulator of the mitotic and meiotic cell cycles. The chain is Cyclin-dependent kinase 1 from Ajellomyces capsulatus (Darling's disease fungus).